Reading from the N-terminus, the 150-residue chain is MRFMAGPAGSQSLGPLCFHSSPQALYTVLLIVLVMMSLVFGKFVPVNWEPPQPLPFPKYLRCYRCLLETKELGCLLGSDICLTPAGSSCITLHKKNSSGSDVMVSDCRSKEQMSDCSNTRTSPVSGFWIFSQYCFLDFCNDPQNRGLYTP.

Positions 1–41 (MRFMAGPAGSQSLGPLCFHSSPQALYTVLLIVLVMMSLVFG) are cleaved as a signal peptide. The UPAR/Ly6 domain occupies 60–150 (LRCYRCLLET…DPQNRGLYTP (91 aa)). Disulfide bonds link cysteine 62-cysteine 89, cysteine 65-cysteine 74, cysteine 81-cysteine 107, and cysteine 134-cysteine 139. N-linked (GlcNAc...) asparagine glycosylation is present at asparagine 96.

In terms of assembly, forms oligomers. Post-translationally, N-glycosylated. As to expression, detected in T-cell lines and fetal and adult lung.

It localises to the secreted. Its function is as follows. May have a role in hematopoietic cell differentiation. This chain is Lymphocyte antigen 6 complex locus protein G5c (LY6G5C), found in Homo sapiens (Human).